The primary structure comprises 181 residues: Ferritin heavy chain (181 aa).

The Ferritin-like diiron domain occupies 10-159 (QNYHQDCEAA…DHVTNLRKMG (150 aa)). Fe cation is bound by residues glutamate 27, glutamate 62, histidine 65, glutamate 107, and glutamine 141.

Belongs to the ferritin family. In terms of assembly, oligomer of 24 subunits. There are two types of subunits: L (light) chain and H (heavy) chain. The major chain can be light or heavy, depending on the species and tissue type. The functional molecule forms a roughly spherical shell with a diameter of 12 nm and contains a central cavity into which the insoluble mineral iron core is deposited. Expressed in erythroblasts (at protein level). Expressed in heart, liver, spleen, lung, kidney, large intestine, small intestine, muscle, glandular stomach, ovary and oviduct.

The protein localises to the cytoplasm. It is found in the lysosome. Its subcellular location is the cytoplasmic vesicle. It localises to the autophagosome. The catalysed reaction is 4 Fe(2+) + O2 + 4 H(+) = 4 Fe(3+) + 2 H2O. Stores iron in a soluble, non-toxic, readily available form. Important for iron homeostasis. Has ferroxidase activity. Iron is taken up in the ferrous form and deposited as ferric hydroxides after oxidation. Also plays a role in delivery of iron to cells. Mediates iron uptake in capsule cells of the developing kidney. Delivery to lysosomes is mediated by the cargo receptor NCOA4 for autophagic degradation and release of iron. Its function is as follows. Inhibits translation of various mRNA species in vitro. Associates with a 35S prosome-like particle that contains non-translated mRNAs in a complex with proteins. May be involved in pre-translational regulation of some mRNA. This is Ferritin heavy chain from Anas platyrhynchos (Mallard).